A 211-amino-acid polypeptide reads, in one-letter code: RILP-like protein 2 (211 aa).

Residues 1-32 (MEEPPVREEEEEEGEEDEERDEVGPEGALGKS) are disordered. Residues 8–21 (EEEEEEGEEDEERD) show a composition bias toward acidic residues. The RH1 domain occupies 24–106 (GPEGALGKSP…RKEVEGLRRQ (83 aa)). A coiled-coil region spans residues 70-164 (RVLEMLEALV…VQEELQCYKS (95 aa)). Ser-107 bears the Phosphoserine mark. The region spanning 130–201 (RPRFTLQELR…NKEEKTIIKK (72 aa)) is the RH2 domain. The segment at 166 to 190 (LIPPREGPGGRREKDAVVTSAKNAG) is disordered.

The protein belongs to the RILPL family. Homodimer. Interacts with RAC1. Interacts (via N-terminus) with MYO5A, the interaction is required for its role in dendrite formation. Interacts with RAB8A; interaction is dependent on the phosphorylation of RAB8A on 'Thr-72'. Interacts with RAB10 and RAB12; interaction is dependent on the phosphorylation of 'Thr-73' on RAB10 and 'Ser-105' on RAB12. As to expression, widely expressed. Expressed at higher level in lung.

It localises to the cytoplasm. Its subcellular location is the cytosol. The protein localises to the cytoskeleton. It is found in the microtubule organizing center. The protein resides in the centrosome. It localises to the cell projection. Its subcellular location is the cilium. Its function is as follows. Involved in cell shape and neuronal morphogenesis, positively regulating the establishment and maintenance of dendritic spines. Plays a role in cellular protein transport, including protein transport away from primary cilia. May function via activation of RAC1 and PAK1. The protein is RILP-like protein 2 (RILPL2) of Homo sapiens (Human).